We begin with the raw amino-acid sequence, 239 residues long: Lactate utilization protein A (239 aa).

This sequence belongs to the LutA/YkgE family.

Its function is as follows. Is involved in L-lactate degradation and allows cells to grow with lactate as the sole carbon source. The sequence is that of Lactate utilization protein A from Geobacillus thermodenitrificans (strain NG80-2).